The following is a 238-amino-acid chain: ATP synthase subunit a (238 aa).

5 helical membrane passes run 15–35 (IFNL…FVFI), 76–96 (YSLF…LGLM), 111–131 (PTAN…LTHI), 167–187 (LALR…LLLL), and 208–230 (AFSV…VYLG).

The protein belongs to the ATPase A chain family. In terms of assembly, F-type ATPases have 2 components, CF(1) - the catalytic core - and CF(0) - the membrane proton channel. CF(1) has five subunits: alpha(3), beta(3), gamma(1), delta(1), epsilon(1). CF(0) has three main subunits: a(1), b(2) and c(9-12). The alpha and beta chains form an alternating ring which encloses part of the gamma chain. CF(1) is attached to CF(0) by a central stalk formed by the gamma and epsilon chains, while a peripheral stalk is formed by the delta and b chains.

The protein localises to the cell membrane. Functionally, key component of the proton channel; it plays a direct role in the translocation of protons across the membrane. In Streptococcus pneumoniae serotype 19F (strain G54), this protein is ATP synthase subunit a.